The sequence spans 87 residues: UPF0367 protein Syncc9902_0316 (87 aa).

The protein belongs to the UPF0367 family.

The polypeptide is UPF0367 protein Syncc9902_0316 (Synechococcus sp. (strain CC9902)).